The chain runs to 140 residues: Nucleoside diphosphate kinase (140 aa).

Residues Lys11, Phe59, Arg87, Thr93, Arg104, and Asn114 each coordinate ATP. The active-site Pros-phosphohistidine intermediate is the His117.

It belongs to the NDK family. As to quaternary structure, homotetramer. Requires Mg(2+) as cofactor.

The protein resides in the cytoplasm. The enzyme catalyses a 2'-deoxyribonucleoside 5'-diphosphate + ATP = a 2'-deoxyribonucleoside 5'-triphosphate + ADP. It carries out the reaction a ribonucleoside 5'-diphosphate + ATP = a ribonucleoside 5'-triphosphate + ADP. Its function is as follows. Major role in the synthesis of nucleoside triphosphates other than ATP. The ATP gamma phosphate is transferred to the NDP beta phosphate via a ping-pong mechanism, using a phosphorylated active-site intermediate. This chain is Nucleoside diphosphate kinase, found in Rhizobium meliloti (strain 1021) (Ensifer meliloti).